The following is a 147-amino-acid chain: Hordoindoline-B2 (147 aa).

Residues 1–19 (MKTLFLLALLALVASTTSA) form the signal peptide. A propeptide spanning residues 20-28 (QYSVGGGYN) is cleaved from the precursor.

Five disulfide bonds are present. In terms of tissue distribution, found in endosperm and aleurone layer of developing kernels, but not in the embryo.

Its subcellular location is the membrane. It is found in the secreted. The protein localises to the extracellular space. In terms of biological role, acts as a membranotoxin, probably through its antibacterial and antifungal activities, contributing to the defense mechanism of the plant against predators. Forms monovalent cation-selective ion channels in membranes. Contributes to grain texture and hardness. The protein is Hordoindoline-B2 (HINB-2) of Hordeum vulgare (Barley).